Here is a 269-residue protein sequence, read N- to C-terminus: Regulating synaptic membrane exocytosis protein 4 (269 aa).

Residues 115-233 (PMGDVEIGLQ…DLTTLAVGWY (119 aa)) form the C2 domain. Residues S254 and S257 each carry the phosphoserine modification.

Binds PPFIA3. Does not bind RAB3.

The protein resides in the synapse. Regulates synaptic membrane exocytosis. In Homo sapiens (Human), this protein is Regulating synaptic membrane exocytosis protein 4 (RIMS4).